The sequence spans 225 residues: MCTSLTTCEWKKVFYEKMEVAKPADSWELIIDPNLKPSELAPGWKQYLEQHASGRFHCSWCWHTWQSAHVVILFHMFLDRAQRAGSVRMRVFKQLCYECGTARLDESSMLEENIEGLVDNLITSLREQCYEEDGGQYRIHVASRPDSGPHRAEFCEACQEGIVHWKPSEKLLEEEVTTYTSEASKPRAQAGSGYNFLSLRWCLFWASLCLLVVYLQFSFLSPAFF.

At 1 to 196 (MCTSLTTCEW…RAQAGSGYNF (196 aa)) the chain is on the cytoplasmic side. The 3CxxC-type zinc-finger motif lies at 52-161 (ASGRFHCSWC…AEFCEACQEG (110 aa)). A helical membrane pass occupies residues 197 to 219 (LSLRWCLFWASLCLLVVYLQFSF). Residues 220–225 (LSPAFF) lie on the Extracellular side of the membrane.

This sequence belongs to the TMEM7 family. As to quaternary structure, interacts with olfactory receptors. In terms of tissue distribution, expressed in circumvallate papillae and testis.

It is found in the cell membrane. Its function is as follows. Specifically promotes functional cell surface expression of olfactory receptors, but not of other GPCRs. In Homo sapiens (Human), this protein is Receptor-transporting protein 2 (RTP2).